Reading from the N-terminus, the 205-residue chain is Histidine biosynthesis bifunctional protein HisIE (205 aa).

Residues 1–116 (MLKLKFNEEG…KVEKPLPFEV (116 aa)) form a phosphoribosyl-AMP cyclohydrolase region. Residues 117-205 (LPRLQDVIRE…VMEELIRRFK (89 aa)) are phosphoribosyl-ATP pyrophosphohydrolase.

This sequence in the N-terminal section; belongs to the PRA-CH family. The protein in the C-terminal section; belongs to the PRA-PH family.

Its subcellular location is the cytoplasm. The enzyme catalyses 1-(5-phospho-beta-D-ribosyl)-ATP + H2O = 1-(5-phospho-beta-D-ribosyl)-5'-AMP + diphosphate + H(+). It catalyses the reaction 1-(5-phospho-beta-D-ribosyl)-5'-AMP + H2O = 1-(5-phospho-beta-D-ribosyl)-5-[(5-phospho-beta-D-ribosylamino)methylideneamino]imidazole-4-carboxamide. It functions in the pathway amino-acid biosynthesis; L-histidine biosynthesis; L-histidine from 5-phospho-alpha-D-ribose 1-diphosphate: step 2/9. Its pathway is amino-acid biosynthesis; L-histidine biosynthesis; L-histidine from 5-phospho-alpha-D-ribose 1-diphosphate: step 3/9. The polypeptide is Histidine biosynthesis bifunctional protein HisIE (hisI) (Aquifex aeolicus (strain VF5)).